Here is a 116-residue protein sequence, read N- to C-terminus: Large ribosomal subunit protein uL18 (116 aa).

Belongs to the universal ribosomal protein uL18 family. Part of the 50S ribosomal subunit; part of the 5S rRNA/L5/L18/L25 subcomplex. Contacts the 5S and 23S rRNAs.

This is one of the proteins that bind and probably mediate the attachment of the 5S RNA into the large ribosomal subunit, where it forms part of the central protuberance. This Saccharophagus degradans (strain 2-40 / ATCC 43961 / DSM 17024) protein is Large ribosomal subunit protein uL18.